Consider the following 377-residue polypeptide: uncharacterized protein (377 aa).

2 helical membrane passes run 23-43 (LKFI…FIAY) and 251-271 (GSFI…SISY).

It is found in the cell membrane. This is an uncharacterized protein from Methanocaldococcus jannaschii (strain ATCC 43067 / DSM 2661 / JAL-1 / JCM 10045 / NBRC 100440) (Methanococcus jannaschii).